Reading from the N-terminus, the 48-residue chain is Small, acid-soluble spore protein P (48 aa).

A compositionally biased stretch (basic and acidic residues) spans 1 to 12; the sequence is MTNKNDGKDMRK. The disordered stretch occupies residues 1-48; sequence MTNKNDGKDMRKNAPKGAQPGQPEPLSGSKKVKNRNHTRQKHNSSHDM. Basic residues predominate over residues 30–48; the sequence is KKVKNRNHTRQKHNSSHDM.

The protein belongs to the SspP family.

The protein resides in the spore core. In Bacillus licheniformis (strain ATCC 14580 / DSM 13 / JCM 2505 / CCUG 7422 / NBRC 12200 / NCIMB 9375 / NCTC 10341 / NRRL NRS-1264 / Gibson 46), this protein is Small, acid-soluble spore protein P.